Consider the following 397-residue polypeptide: Succinate--CoA ligase [ADP-forming] subunit beta (397 aa).

The ATP-grasp domain occupies K9–Q254. ATP is bound by residues K46, G53 to G55, E109, A112, and E117. Residues N209 and D223 each coordinate Mg(2+). Residues N274 and G331–M333 each bind substrate.

This sequence belongs to the succinate/malate CoA ligase beta subunit family. Heterotetramer of two alpha and two beta subunits. Mg(2+) is required as a cofactor.

The catalysed reaction is succinate + ATP + CoA = succinyl-CoA + ADP + phosphate. It catalyses the reaction GTP + succinate + CoA = succinyl-CoA + GDP + phosphate. The protein operates within carbohydrate metabolism; tricarboxylic acid cycle; succinate from succinyl-CoA (ligase route): step 1/1. Succinyl-CoA synthetase functions in the citric acid cycle (TCA), coupling the hydrolysis of succinyl-CoA to the synthesis of either ATP or GTP and thus represents the only step of substrate-level phosphorylation in the TCA. The beta subunit provides nucleotide specificity of the enzyme and binds the substrate succinate, while the binding sites for coenzyme A and phosphate are found in the alpha subunit. The chain is Succinate--CoA ligase [ADP-forming] subunit beta from Rhizobium rhizogenes (strain K84 / ATCC BAA-868) (Agrobacterium radiobacter).